The following is a 405-amino-acid chain: Dematin (405 aa).

Disordered stretches follow at residues 1-29 (MERL…SPSS), 81-100 (SREC…PEVW), and 108-332 (IISQ…DRGN). The span at 11 to 29 (SPGSVSSSRDSSVPGSPSS) shows a compositional bias: low complexity. Residues Ser16, Ser18, Ser26, Ser92, Ser96, Ser110, and Ser113 each carry the phosphoserine modification. Low complexity predominate over residues 113 to 124 (STPRTTGTPRTS). A Phosphothreonine modification is found at Thr114. 2 positions are modified to phosphoserine: Ser156 and Ser226. The segment covering 216–228 (EEEEEEEDDDSEE) has biased composition (acidic residues). The interval 224–308 (DDSEEEIKAI…SRLQSTEFSP (85 aa)) is interaction with RASGRF2. Basic and acidic residues-rich tracts occupy residues 229-242 (EIKA…EELS) and 252-261 (ILKEEMEKSL). A phosphoserine mark is found at Ser269, Ser279, Ser289, Ser303, Ser315, Ser333, Ser372, and Ser383. Low complexity predominate over residues 277–292 (HTSLHSGTSKSSSLPS). A compositionally biased stretch (polar residues) spans 294-322 (GRTTLSRLQSTEFSPSGSEAGSPGLQNGE). The HP domain occupies 337–405 (VLEQKIYPYE…NELKKKASLF (69 aa)). Ser403 carries the phosphoserine; by PKA modification.

Belongs to the villin/gelsolin family. As to quaternary structure, monomeric (isoform 2); under reducing conditions. Self-associates. Exists under oxidizing condition as a trimer of two isoforms 2 and isoform 1 linked by disulfide bonds. Found in a complex with DMTN, F-actin and spectrin. Found in a complex with ADD2, DMTN and SLC2A1. Interacts with F-actin, ITPKB and spectrin. Isoform 2 interacts with SLC2A1 (via C-terminus cytoplasmic region). Interacts with RASGRF2. In terms of processing, phosphorylated. Phosphorylation at Ser-403 by PKA causes the C-terminal headpiece domain to associate with the N-terminal core domain, and leads to the inhibition of its actin bundling activity. Expressed in platelets. Isoform 1 and isoform 2 are expressed in mature erythrocytes (at protein level).

The protein resides in the cytoplasm. It localises to the cytosol. The protein localises to the perinuclear region. It is found in the cytoskeleton. Its subcellular location is the cell membrane. The protein resides in the membrane. It localises to the endomembrane system. The protein localises to the cell projection. Its function is as follows. Membrane-cytoskeleton-associated protein with F-actin-binding activity that induces F-actin bundles formation and stabilization. Its F-actin-bundling activity is reversibly regulated upon its phosphorylation by the cAMP-dependent protein kinase A (PKA). Binds to the erythrocyte membrane glucose transporter-1 SLC2A1/GLUT1, and hence stabilizes and attaches the spectrin-actin network to the erythrocytic plasma membrane. Plays a role in maintaining the functional integrity of PKA-activated erythrocyte shape and the membrane mechanical properties. Also plays a role as a modulator of actin dynamics in fibroblasts; acts as a negative regulator of the RhoA activation pathway. In platelets, functions as a regulator of internal calcium mobilization across the dense tubular system that affects platelet granule secretion pathways and aggregation. Also required for the formation of a diverse set of cell protrusions, such as filopodia and lamellipodia, necessary for platelet cell spreading, motility and migration. Acts as a tumor suppressor and inhibits malignant cell transformation. This Mus musculus (Mouse) protein is Dematin (Dmtn).